The sequence spans 598 residues: Elongation factor 4 (598 aa).

The tr-type G domain maps to 4–186; it reads DHIRNFSIIA…AIVKRVPPPK (183 aa). GTP is bound by residues 16-21 and 133-136; these read DHGKST and NKID.

It belongs to the TRAFAC class translation factor GTPase superfamily. Classic translation factor GTPase family. LepA subfamily.

It is found in the cell inner membrane. It carries out the reaction GTP + H2O = GDP + phosphate + H(+). In terms of biological role, required for accurate and efficient protein synthesis under certain stress conditions. May act as a fidelity factor of the translation reaction, by catalyzing a one-codon backward translocation of tRNAs on improperly translocated ribosomes. Back-translocation proceeds from a post-translocation (POST) complex to a pre-translocation (PRE) complex, thus giving elongation factor G a second chance to translocate the tRNAs correctly. Binds to ribosomes in a GTP-dependent manner. In Magnetococcus marinus (strain ATCC BAA-1437 / JCM 17883 / MC-1), this protein is Elongation factor 4.